A 105-amino-acid chain; its full sequence is Heat shock protein HspQ (105 aa).

A disordered region spans residues G75–N105.

The protein belongs to the HspQ family.

It localises to the cytoplasm. Involved in the degradation of certain denaturated proteins, including DnaA, during heat shock stress. The protein is Heat shock protein HspQ of Cronobacter sakazakii (strain ATCC BAA-894) (Enterobacter sakazakii).